The following is a 551-amino-acid chain: L-lactate permease (551 aa).

Helical transmembrane passes span 13–33 (NIWLSSLIASLPILFFFFALI), 37–57 (LKGYVAASWTVVIALAVALLF), 69–89 (VVYGFFYGLWPIAWIIIAAVF), 131–151 (GAAGFGAPVAITAALLVGLGF), 159–179 (LCLIVNTAPVAFGAMGIPILV), 194–214 (MVGRQLPFLTIIVLFWIMAIM), 244–264 (FIGPELPDIISSLVSLVCLTL), 306–326 (FLFLTATVTLWSVPPFKALFA), 366–386 (FDWFSATGTAILFAALLSIVW), 405–425 (LALPIYSIGMVLAFAFISNYS), 438–458 (TGSAFTFFSPFLGWLGVFLTG), and 530–550 (IFTCMVGVITTLQAYVLTWMI).

This sequence belongs to the lactate permease family.

The protein localises to the cell inner membrane. It catalyses the reaction (S)-lactate(in) + H(+)(in) = (S)-lactate(out) + H(+)(out). The enzyme catalyses (R)-lactate(in) + H(+)(in) = (R)-lactate(out) + H(+)(out). It carries out the reaction glycolate(in) + H(+)(in) = glycolate(out) + H(+)(out). Its function is as follows. Uptake of L-lactate across the membrane. Can also transport D-lactate and glycolate. Seems to be driven by a proton motive force. The sequence is that of L-lactate permease (lldP) from Salmonella typhimurium (strain LT2 / SGSC1412 / ATCC 700720).